The chain runs to 66 residues: Large ribosomal subunit protein bL33c (66 aa).

The protein belongs to the bacterial ribosomal protein bL33 family.

The protein resides in the plastid. The protein is Large ribosomal subunit protein bL33c of Cuscuta gronovii (Common dodder).